Reading from the N-terminus, the 350-residue chain is Uroporphyrinogen decarboxylase (350 aa).

Residues 28-32, Asp-78, Tyr-155, Ser-210, and His-325 each bind substrate; that span reads RQAGR.

It belongs to the uroporphyrinogen decarboxylase family. As to quaternary structure, homodimer.

The protein localises to the cytoplasm. The catalysed reaction is uroporphyrinogen III + 4 H(+) = coproporphyrinogen III + 4 CO2. Its pathway is porphyrin-containing compound metabolism; protoporphyrin-IX biosynthesis; coproporphyrinogen-III from 5-aminolevulinate: step 4/4. Catalyzes the decarboxylation of four acetate groups of uroporphyrinogen-III to yield coproporphyrinogen-III. The polypeptide is Uroporphyrinogen decarboxylase (Microcystis aeruginosa (strain NIES-843 / IAM M-2473)).